Consider the following 231-residue polypeptide: Cytochrome c oxidase assembly factor 7A (231 aa).

Sel1-like repeat units lie at residues 34–66, 68–104, 108–145, 146–182, and 183–218; these read PDGCNRLAEYFENIKKNFESAAGILKINCDQNE, SESFYKLGAYYVTGKGGLPVDLKAAYSCFLKSCNKGG, IDSCHNVGLLAHDGRVNDEKADAVTARDYYNKACDGNF, AASCFNLSATYLQGAPGIPKDMNKALHFSEKACSLGH, and VWGCANASRMYKLGDGVAKNDEKAESLKNRARDLHK.

The protein belongs to the hcp beta-lactamase family.

It localises to the mitochondrion intermembrane space. In terms of biological role, may be required for assembly of mitochondrial respiratory chain complexes. In Xenopus laevis (African clawed frog), this protein is Cytochrome c oxidase assembly factor 7A (coa7-a).